Here is a 262-residue protein sequence, read N- to C-terminus: Pyridoxine 5'-phosphate synthase (262 aa).

Asn6 is a binding site for 3-amino-2-oxopropyl phosphate. 1-deoxy-D-xylulose 5-phosphate is bound at residue 8–9; the sequence is DH. Residue Arg17 participates in 3-amino-2-oxopropyl phosphate binding. The Proton acceptor role is filled by His43. Residues Arg45 and His50 each contribute to the 1-deoxy-D-xylulose 5-phosphate site. The active-site Proton acceptor is the Glu70. Thr102 lines the 1-deoxy-D-xylulose 5-phosphate pocket. The active-site Proton donor is the His215. Residues Gly216 and 237-238 contribute to the 3-amino-2-oxopropyl phosphate site; that span reads GH.

Belongs to the PNP synthase family. Homooctamer; tetramer of dimers.

Its subcellular location is the cytoplasm. It carries out the reaction 3-amino-2-oxopropyl phosphate + 1-deoxy-D-xylulose 5-phosphate = pyridoxine 5'-phosphate + phosphate + 2 H2O + H(+). It functions in the pathway cofactor biosynthesis; pyridoxine 5'-phosphate biosynthesis; pyridoxine 5'-phosphate from D-erythrose 4-phosphate: step 5/5. Functionally, catalyzes the complicated ring closure reaction between the two acyclic compounds 1-deoxy-D-xylulose-5-phosphate (DXP) and 3-amino-2-oxopropyl phosphate (1-amino-acetone-3-phosphate or AAP) to form pyridoxine 5'-phosphate (PNP) and inorganic phosphate. The protein is Pyridoxine 5'-phosphate synthase of Helicobacter pylori (strain ATCC 700392 / 26695) (Campylobacter pylori).